The following is a 427-amino-acid chain: Enolase (427 aa).

Q163 is a (2R)-2-phosphoglycerate binding site. E205 (proton donor) is an active-site residue. Mg(2+) is bound by residues D242, E285, and D312. Positions 337, 366, 367, and 388 each coordinate (2R)-2-phosphoglycerate. The active-site Proton acceptor is the K337.

This sequence belongs to the enolase family. Mg(2+) serves as cofactor.

Its subcellular location is the cytoplasm. It is found in the secreted. The protein localises to the cell surface. The enzyme catalyses (2R)-2-phosphoglycerate = phosphoenolpyruvate + H2O. Its pathway is carbohydrate degradation; glycolysis; pyruvate from D-glyceraldehyde 3-phosphate: step 4/5. Catalyzes the reversible conversion of 2-phosphoglycerate (2-PG) into phosphoenolpyruvate (PEP). It is essential for the degradation of carbohydrates via glycolysis. The protein is Enolase of Thiobacillus denitrificans (strain ATCC 25259 / T1).